The chain runs to 274 residues: Diaminopimelate epimerase (274 aa).

Residues asparagine 11, glutamine 44, and asparagine 64 each coordinate substrate. Catalysis depends on cysteine 73, which acts as the Proton donor. Substrate contacts are provided by residues 74–75, asparagine 157, asparagine 190, and 208–209; these read GN and ER. Cysteine 217 (proton acceptor) is an active-site residue. Substrate is bound at residue 218 to 219; that stretch reads GS.

This sequence belongs to the diaminopimelate epimerase family. In terms of assembly, homodimer.

The protein localises to the cytoplasm. The enzyme catalyses (2S,6S)-2,6-diaminopimelate = meso-2,6-diaminopimelate. The protein operates within amino-acid biosynthesis; L-lysine biosynthesis via DAP pathway; DL-2,6-diaminopimelate from LL-2,6-diaminopimelate: step 1/1. Catalyzes the stereoinversion of LL-2,6-diaminopimelate (L,L-DAP) to meso-diaminopimelate (meso-DAP), a precursor of L-lysine and an essential component of the bacterial peptidoglycan. This is Diaminopimelate epimerase from Actinobacillus pleuropneumoniae serotype 7 (strain AP76).